The following is a 256-amino-acid chain: Alcohol dehydrogenase (256 aa).

12 to 35 contributes to the NAD(+) binding site; the sequence is FVAGLGGIGLDTSKELVKRDLKNL. Substrate is bound at residue Ser140. Tyr153 serves as the catalytic Proton acceptor.

The protein belongs to the short-chain dehydrogenases/reductases (SDR) family. In terms of assembly, homodimer.

The catalysed reaction is a primary alcohol + NAD(+) = an aldehyde + NADH + H(+). It carries out the reaction a secondary alcohol + NAD(+) = a ketone + NADH + H(+). The polypeptide is Alcohol dehydrogenase (Adh) (Drosophila orena (Fruit fly)).